Consider the following 256-residue polypeptide: MRIVLGEIFGLKIYSYGFMIGLGIICATLLFLKRGTQRGYNEDKLFNATILTVISGILGGKILYIITEWKTVMQDPSLIFRDFGNGFVIYGAIIGGALGIALCSLKNKWNVLELADLVVPGLALAQGFGRIGCLLAGCCYGAETTSSIGIIFPADSLAPAGVPLYPTQIFSSIFDFALGLFLLWYGNKNKEKGKTMSMYMIIYSIGRFFVEFLRNDPRGSVGLLSTSQFISIFILIGGILLYNINKLKGRKETGEK.

3 helical membrane passes run 11–31, 46–66, and 83–103; these read LKIYSYGFMIGLGIICATLLF, FNATILTVISGILGGKILYII, and FGNGFVIYGAIIGGALGIALC. R130 is an a 1,2-diacyl-sn-glycero-3-phospho-(1'-sn-glycerol) binding site. The next 3 helical transmembrane spans lie at 142–162, 164–184, and 221–241; these read AETTSSIGIIFPADSLAPAGV, LYPTQIFSSIFDFALGLFLLW, and VGLLSTSQFISIFILIGGILL.

The protein belongs to the Lgt family.

It is found in the cell membrane. The enzyme catalyses L-cysteinyl-[prolipoprotein] + a 1,2-diacyl-sn-glycero-3-phospho-(1'-sn-glycerol) = an S-1,2-diacyl-sn-glyceryl-L-cysteinyl-[prolipoprotein] + sn-glycerol 1-phosphate + H(+). It functions in the pathway protein modification; lipoprotein biosynthesis (diacylglyceryl transfer). In terms of biological role, catalyzes the transfer of the diacylglyceryl group from phosphatidylglycerol to the sulfhydryl group of the N-terminal cysteine of a prolipoprotein, the first step in the formation of mature lipoproteins. The sequence is that of Phosphatidylglycerol--prolipoprotein diacylglyceryl transferase 2 from Clostridium perfringens (strain 13 / Type A).